A 264-amino-acid chain; its full sequence is Thymidylate synthase (264 aa).

Arg21 serves as a coordination point for dUMP. His51 is a (6R)-5,10-methylene-5,6,7,8-tetrahydrofolate binding site. 126–127 is a dUMP binding site; that stretch reads RR. The Nucleophile role is filled by Cys146. DUMP contacts are provided by residues 166–169, Asn177, and 207–209; these read RSAD and HIY. (6R)-5,10-methylene-5,6,7,8-tetrahydrofolate is bound at residue Asp169. Position 263 (Ala263) interacts with (6R)-5,10-methylene-5,6,7,8-tetrahydrofolate.

It belongs to the thymidylate synthase family. Bacterial-type ThyA subfamily. As to quaternary structure, homodimer.

Its subcellular location is the cytoplasm. It catalyses the reaction dUMP + (6R)-5,10-methylene-5,6,7,8-tetrahydrofolate = 7,8-dihydrofolate + dTMP. It functions in the pathway pyrimidine metabolism; dTTP biosynthesis. In terms of biological role, catalyzes the reductive methylation of 2'-deoxyuridine-5'-monophosphate (dUMP) to 2'-deoxythymidine-5'-monophosphate (dTMP) while utilizing 5,10-methylenetetrahydrofolate (mTHF) as the methyl donor and reductant in the reaction, yielding dihydrofolate (DHF) as a by-product. This enzymatic reaction provides an intracellular de novo source of dTMP, an essential precursor for DNA biosynthesis. The chain is Thymidylate synthase from Brucella ovis (strain ATCC 25840 / 63/290 / NCTC 10512).